The following is a 645-amino-acid chain: Acetyl-coenzyme A synthetase (645 aa).

CoA contacts are provided by residues 190–193 (RGGK) and Thr-308. ATP-binding positions include 384–386 (GEP), 408–413 (DTWWQT), Asp-497, and Arg-512. Ser-520 lines the CoA pocket. Arg-523 is a binding site for ATP. Residues Val-534, His-536, and Ile-539 each coordinate Mg(2+). N6-acetyllysine is present on Lys-606.

The protein belongs to the ATP-dependent AMP-binding enzyme family. Mg(2+) is required as a cofactor. In terms of processing, acetylated. Deacetylation by the SIR2-homolog deacetylase activates the enzyme.

It carries out the reaction acetate + ATP + CoA = acetyl-CoA + AMP + diphosphate. Functionally, catalyzes the conversion of acetate into acetyl-CoA (AcCoA), an essential intermediate at the junction of anabolic and catabolic pathways. AcsA undergoes a two-step reaction. In the first half reaction, AcsA combines acetate with ATP to form acetyl-adenylate (AcAMP) intermediate. In the second half reaction, it can then transfer the acetyl group from AcAMP to the sulfhydryl group of CoA, forming the product AcCoA. The protein is Acetyl-coenzyme A synthetase of Alcanivorax borkumensis (strain ATCC 700651 / DSM 11573 / NCIMB 13689 / SK2).